Consider the following 40-residue polypeptide: Photosystem II reaction center protein J (40 aa).

A helical membrane pass occupies residues 8–28 (IPLWLIGTVTGIPVIGLVGVF).

It belongs to the PsbJ family. As to quaternary structure, PSII is composed of 1 copy each of membrane proteins PsbA, PsbB, PsbC, PsbD, PsbE, PsbF, PsbH, PsbI, PsbJ, PsbK, PsbL, PsbM, PsbT, PsbX, PsbY, PsbZ, Psb30/Ycf12, at least 3 peripheral proteins of the oxygen-evolving complex and a large number of cofactors. It forms dimeric complexes.

It is found in the plastid. It localises to the chloroplast thylakoid membrane. Functionally, one of the components of the core complex of photosystem II (PSII). PSII is a light-driven water:plastoquinone oxidoreductase that uses light energy to abstract electrons from H(2)O, generating O(2) and a proton gradient subsequently used for ATP formation. It consists of a core antenna complex that captures photons, and an electron transfer chain that converts photonic excitation into a charge separation. The sequence is that of Photosystem II reaction center protein J from Lolium perenne (Perennial ryegrass).